A 447-amino-acid chain; its full sequence is N-succinylarginine dihydrolase (447 aa).

Substrate is bound by residues 19 to 28, N110, and 137 to 138; these read AGLSFGNEAS and HR. E174 is an active-site residue. R214 is a binding site for substrate. The active site involves H250. D252 and N365 together coordinate substrate. C371 acts as the Nucleophile in catalysis.

It belongs to the succinylarginine dihydrolase family. Homodimer.

It carries out the reaction N(2)-succinyl-L-arginine + 2 H2O + 2 H(+) = N(2)-succinyl-L-ornithine + 2 NH4(+) + CO2. The protein operates within amino-acid degradation; L-arginine degradation via AST pathway; L-glutamate and succinate from L-arginine: step 2/5. Functionally, catalyzes the hydrolysis of N(2)-succinylarginine into N(2)-succinylornithine, ammonia and CO(2). The polypeptide is N-succinylarginine dihydrolase (Acinetobacter baumannii (strain ACICU)).